We begin with the raw amino-acid sequence, 89 residues long: Small ribosomal subunit protein uS15 (89 aa).

This sequence belongs to the universal ribosomal protein uS15 family. Part of the 30S ribosomal subunit. Forms a bridge to the 50S subunit in the 70S ribosome, contacting the 23S rRNA.

Its function is as follows. One of the primary rRNA binding proteins, it binds directly to 16S rRNA where it helps nucleate assembly of the platform of the 30S subunit by binding and bridging several RNA helices of the 16S rRNA. Forms an intersubunit bridge (bridge B4) with the 23S rRNA of the 50S subunit in the ribosome. The chain is Small ribosomal subunit protein uS15 from Caulobacter vibrioides (strain NA1000 / CB15N) (Caulobacter crescentus).